Here is a 31-residue protein sequence, read N- to C-terminus: Photosystem II reaction center protein T (31 aa).

The helical transmembrane segment at 3-23 threads the bilayer; it reads SFAYILILAFSIGTLFFAIAL.

The protein belongs to the PsbT family. In terms of assembly, PSII is composed of 1 copy each of membrane proteins PsbA, PsbB, PsbC, PsbD, PsbE, PsbF, PsbH, PsbI, PsbJ, PsbK, PsbL, PsbM, PsbT, PsbX, PsbY, PsbZ, Psb30/Ycf12, peripheral proteins PsbO, CyanoQ (PsbQ), PsbU, PsbV and a large number of cofactors. It forms dimeric complexes.

It is found in the cellular thylakoid membrane. In terms of biological role, found at the monomer-monomer interface of the photosystem II (PS II) dimer, plays a role in assembly and dimerization of PSII. PSII is a light-driven water plastoquinone oxidoreductase, using light energy to abstract electrons from H(2)O, generating a proton gradient subsequently used for ATP formation. The sequence is that of Photosystem II reaction center protein T from Synechococcus sp. (strain RCC307).